The sequence spans 475 residues: CAAX prenyl protease 1 homolog (475 aa).

Residues 1–18 (MGMWASVDAMWDFPAEKR) are Lumenal-facing. The helical transmembrane segment at 19–39 (IFGAVLLFSWTVYLWETFLAQ) threads the bilayer. Residues 40–81 (RQRRIYKTTTRVPAELEQIMDSDTFEKSRLYQLDKSTFSFWS) are Nuclear-facing. Residues 82-102 (GLYSEVEGTFILLFGGIPYLW) form a helical membrane-spanning segment. Residues 103-123 (RLSGQFCSSAGFGPEYEIIQS) lie on the Lumenal side of the membrane. A helical transmembrane segment spans residues 124 to 144 (LVFLLLATLFSALTGLPWSLY). Topologically, residues 145-170 (NTFVIEEKHGFNHQTLEFFMKDAIKK) are nuclear. The helical transmembrane segment at 171-191 (FIVTQCILLPVSALLLYIIKI) threads the bilayer. Over 192–195 (GGDY) the chain is Lumenal. A helical transmembrane segment spans residues 196–216 (FFIYAWLFTLVVSLVLVTIYA). The Nuclear segment spans residues 217–347 (DYIAPLFDKF…GHWKLGHTVK (131 aa)). The interval 293-314 (DNQEESGMEARNEGEGDSEEVK) is disordered. Positions 300 to 314 (MEARNEGEGDSEEVK) are enriched in basic and acidic residues. Histidine 335 lines the Zn(2+) pocket. Glutamate 336 is a catalytic residue. Histidine 339 contributes to the Zn(2+) binding site. Residues 348–368 (NIIISQMNSFLCFFLFAVLIG) traverse the membrane as a helical segment. Over 369-382 (RRELFAAFGFYDSQ) the chain is Lumenal. The chain crosses the membrane as a helical span at residues 383 to 405 (PTLIGLLIIFQFIFSPYNEVLSF). Over 406–475 (CLTVLSRRFE…LQALKNAKQD (70 aa)) the chain is Nuclear. Zn(2+) is bound at residue glutamate 415.

Belongs to the peptidase M48A family. Zn(2+) is required as a cofactor.

Its subcellular location is the endoplasmic reticulum membrane. The protein resides in the nucleus inner membrane. It localises to the early endosome membrane. The protein localises to the late endosome membrane. It carries out the reaction Hydrolyzes the peptide bond -P2-(S-farnesyl or geranylgeranyl)C-P1'-P2'-P3'-COOH where P1' and P2' are amino acids with aliphatic side chains and P3' is any C-terminal residue.. Its activity is regulated as follows. Inhibited by HIV protease inhibitors, such as lopinavir, tipranavir and nelfinavir, leading to defects in lamin A/LMNA maturation and accumulation of prelamin-A/C precursors in cells. This causes defects in nuclear envelope integrity and release of DNA in the cytosol, activating the AIM2 inflammasome. In terms of biological role, transmembrane metalloprotease whose catalytic activity is critical for processing lamin A/LMNA on the inner nuclear membrane and clearing clogged translocons on the endoplasmic reticulum. Proteolytically removes the C-terminal three residues of farnesylated proteins. Also plays an antiviral role independently of its protease activity by restricting enveloped RNA and DNA viruses. Mechanistically, controls IFITM antiviral pathway to hinder viruses from breaching the endosomal barrier by modulating membrane fluidity. The polypeptide is CAAX prenyl protease 1 homolog (Mus musculus (Mouse)).